Here is a 288-residue protein sequence, read N- to C-terminus: Bifunctional protein MdtA (288 aa).

NADP(+) contacts are provided by residues 129 to 132 (TGPV), 152 to 156 (RKLDK), 195 to 198 (TAGA), and Lys-256.

In terms of assembly, homotrimer.

It is found in the cytoplasm. The catalysed reaction is 5,10-methylenetetrahydromethanopterin + NADP(+) = 5,10-methenyl-5,6,7,8-tetrahydromethanopterin + NADPH. The enzyme catalyses (6R)-5,10-methylene-5,6,7,8-tetrahydrofolate + NADP(+) = (6R)-5,10-methenyltetrahydrofolate + NADPH. It functions in the pathway one-carbon metabolism; formaldehyde degradation; formate from formaldehyde (H(4)MPT route): step 2/5. In terms of biological role, catalyzes the dehydrogenation of methylene-H(4)MPT. Can also catalyze the reversible dehydrogenation of methylene-H(4)F with 20-fold lower catalytic efficiency. The protein is Bifunctional protein MdtA of Methylorubrum extorquens (strain ATCC 14718 / DSM 1338 / JCM 2805 / NCIMB 9133 / AM1) (Methylobacterium extorquens).